The chain runs to 466 residues: Clusterin-like protein 1 (466 aa).

The first 20 residues, 1–20, serve as a signal peptide directing secretion; it reads MKPPLLVFIVCLLWLKDSHC. Residues 57 to 111 are a coiled coil; the sequence is KQMKIMMERKEKEHTNLMSTLKKCREEKQEALKLLNEVQEHLEEEERLCRESLAD. 5 cysteine pairs are disulfide-bonded: Cys-105–Cys-333, Cys-116–Cys-325, Cys-119–Cys-322, Cys-124–Cys-315, and Cys-131–Cys-305. Asn-196, Asn-257, Asn-311, Asn-351, Asn-412, and Asn-431 each carry an N-linked (GlcNAc...) asparagine glycan.

The protein belongs to the clusterin family.

It localises to the secreted. In Homo sapiens (Human), this protein is Clusterin-like protein 1 (CLUL1).